The following is a 95-amino-acid chain: Small ribosomal subunit protein bS6 (95 aa).

Belongs to the bacterial ribosomal protein bS6 family.

In terms of biological role, binds together with bS18 to 16S ribosomal RNA. The chain is Small ribosomal subunit protein bS6 from Corynebacterium diphtheriae (strain ATCC 700971 / NCTC 13129 / Biotype gravis).